The sequence spans 276 residues: Diaminopimelate epimerase (276 aa).

Positions 13, 46, and 66 each coordinate substrate. Cys-75 acts as the Proton donor in catalysis. Substrate is bound by residues 76 to 77 (GN), Asn-159, Asn-192, and 210 to 211 (ER). Residue Cys-219 is the Proton acceptor of the active site. 220–221 (GS) is a binding site for substrate.

This sequence belongs to the diaminopimelate epimerase family. In terms of assembly, homodimer.

Its subcellular location is the cytoplasm. The enzyme catalyses (2S,6S)-2,6-diaminopimelate = meso-2,6-diaminopimelate. The protein operates within amino-acid biosynthesis; L-lysine biosynthesis via DAP pathway; DL-2,6-diaminopimelate from LL-2,6-diaminopimelate: step 1/1. Catalyzes the stereoinversion of LL-2,6-diaminopimelate (L,L-DAP) to meso-diaminopimelate (meso-DAP), a precursor of L-lysine and an essential component of the bacterial peptidoglycan. This is Diaminopimelate epimerase from Colwellia psychrerythraea (strain 34H / ATCC BAA-681) (Vibrio psychroerythus).